Here is a 168-residue protein sequence, read N- to C-terminus: RxLR effector protein PITG_12737 (168 aa).

The N-terminal stretch at 1–20 is a signal peptide; the sequence is MRACAILVVAAAAVLTGSTA. A RxLR-dEER motif is present at residues 54 to 77; sequence RRLRKHKTVNTNSEMEYESEAEAR.

Belongs to the RxLR effector family.

The protein localises to the secreted. Its subcellular location is the host nucleus. The protein resides in the host cytoplasm. Effector that enhances P.infestans colonization of Nicotiana benthamiana leaves. The chain is RxLR effector protein PITG_12737 from Phytophthora infestans (strain T30-4) (Potato late blight agent).